The following is a 211-amino-acid chain: Urease accessory protein UreG (211 aa).

11 to 18 (GPVGAGKT) serves as a coordination point for GTP.

This sequence belongs to the SIMIBI class G3E GTPase family. UreG subfamily. As to quaternary structure, homodimer. UreD, UreF and UreG form a complex that acts as a GTP-hydrolysis-dependent molecular chaperone, activating the urease apoprotein by helping to assemble the nickel containing metallocenter of UreC. The UreE protein probably delivers the nickel.

Its subcellular location is the cytoplasm. Its function is as follows. Facilitates the functional incorporation of the urease nickel metallocenter. This process requires GTP hydrolysis, probably effectuated by UreG. This chain is Urease accessory protein UreG, found in Actinobacillus pleuropneumoniae serotype 3 (strain JL03).